We begin with the raw amino-acid sequence, 512 residues long: Ribose import ATP-binding protein RbsA (512 aa).

ABC transporter domains follow at residues Leu-6–Glu-242 and Val-252–Gln-496. Gly-38–Ser-45 contacts ATP.

It belongs to the ABC transporter superfamily. Ribose importer (TC 3.A.1.2.1) family. The complex is composed of an ATP-binding protein (RbsA), two transmembrane proteins (RbsC) and a solute-binding protein (RbsB).

It is found in the cell inner membrane. It carries out the reaction D-ribose(out) + ATP + H2O = D-ribose(in) + ADP + phosphate + H(+). Part of the ABC transporter complex RbsABC involved in ribose import. Responsible for energy coupling to the transport system. This is Ribose import ATP-binding protein RbsA from Pseudomonas putida (strain ATCC 47054 / DSM 6125 / CFBP 8728 / NCIMB 11950 / KT2440).